A 53-amino-acid chain; its full sequence is Large ribosomal subunit protein eL24 (53 aa).

The Zn(2+) site is built by Cys-4, Cys-7, Cys-30, and Cys-34. The C4-type zinc finger occupies 4 to 34; sequence CSFCNKEIEEGTGKMYVKKDGSIYFFCSSKC.

It belongs to the eukaryotic ribosomal protein eL24 family. In terms of assembly, part of the 50S ribosomal subunit. Forms a cluster with proteins L3 and L14. Zn(2+) is required as a cofactor.

Functionally, binds to the 23S rRNA. In Methanobrevibacter smithii (strain ATCC 35061 / DSM 861 / OCM 144 / PS), this protein is Large ribosomal subunit protein eL24.